The chain runs to 116 residues: Toxin CSTX-10 (116 aa).

A signal peptide spans 1-20 (MKVLVIFAVLSLVIFSNCSA). Positions 21 to 47 (ETDEDFFGEESFEADDIIPFIAKEQVR) are excised as a propeptide. Disulfide bonds link C53-C68, C60-C77, C67-C94, and C79-C92.

Expressed by the venom gland.

The protein localises to the secreted. The protein resides in the target cell membrane. In terms of biological role, spider venom toxin that shows calcium channel blocking activity and exhibits cytolytic activity by affecting the outer leaflet curvature and/or pore formation across the membrane. It blocks L-type calcium channels (Cav1/CACNA1) in mammalian neurons at nanomolar concentrations. Furthermore, it produces a slow voltage-independent block of mid/low and high voltage-activated calcium channels in cockroach neurons. Potassium ions, histamine, M-ctenitoxin-Cs1a (AC P83619), CSTX-9 (AC P58604), and CSTX-13 (AC P83919) synergistically increase the insecticidal activity of this toxin. In vivo, it causes paralysis in blow flies and provokes death in drosophila. The sequence is that of Toxin CSTX-10 from Cupiennius salei (American wandering spider).